The primary structure comprises 417 residues: Probable lysophospholipase BODYGUARD 4 (417 aa).

Positions 1–49 (MSFPRKFGTAIHAALSFIVFFFLDLLDAILCVVYEFVDEILEENSTGCY) are cleaved as a signal peptide. The N-palmitoyl cysteine moiety is linked to residue Cys50. The AB hydrolase-1 domain maps to 150 to 259 (VIFIHGFMGS…PPYFPSSVEG (110 aa)). Residue His154 is part of the active site. Residue Ser225 is the Nucleophile of the active site. Active-site charge relay system residues include Asp367 and His395.

As to expression, expressed in epidermal cells.

The protein resides in the cell membrane. It localises to the secreted. It is found in the cell wall. In terms of biological role, involved in cuticle development and morphogenesis. The chain is Probable lysophospholipase BODYGUARD 4 from Arabidopsis thaliana (Mouse-ear cress).